Here is a 257-residue protein sequence, read N- to C-terminus: Imidazole glycerol phosphate synthase subunit HisF (257 aa).

Residues Asp-11 and Asp-130 contribute to the active site.

It belongs to the HisA/HisF family. In terms of assembly, heterodimer of HisH and HisF.

It is found in the cytoplasm. It carries out the reaction 5-[(5-phospho-1-deoxy-D-ribulos-1-ylimino)methylamino]-1-(5-phospho-beta-D-ribosyl)imidazole-4-carboxamide + L-glutamine = D-erythro-1-(imidazol-4-yl)glycerol 3-phosphate + 5-amino-1-(5-phospho-beta-D-ribosyl)imidazole-4-carboxamide + L-glutamate + H(+). The protein operates within amino-acid biosynthesis; L-histidine biosynthesis; L-histidine from 5-phospho-alpha-D-ribose 1-diphosphate: step 5/9. Its function is as follows. IGPS catalyzes the conversion of PRFAR and glutamine to IGP, AICAR and glutamate. The HisF subunit catalyzes the cyclization activity that produces IGP and AICAR from PRFAR using the ammonia provided by the HisH subunit. The sequence is that of Imidazole glycerol phosphate synthase subunit HisF from Shewanella loihica (strain ATCC BAA-1088 / PV-4).